The chain runs to 30 residues: Dermaseptin-DI4 (30 aa).

Expressed by the skin glands.

The protein resides in the secreted. Antibacterial activity against Gram-positive bacteria S.aureus and E.faecalis, and Gram-negative bacteria P.aeruginosa and E.coli. The chain is Dermaseptin-DI4 from Phyllomedusa distincta (Monkey frog).